A 266-amino-acid polypeptide reads, in one-letter code: 3-methyl-2-oxobutanoate hydroxymethyltransferase (266 aa).

Asp45 and Asp84 together coordinate Mg(2+). 3-methyl-2-oxobutanoate contacts are provided by residues Asp45 to Ser46, Asp84, and Lys113. Glu115 lines the Mg(2+) pocket. The Proton acceptor role is filled by Glu183.

Belongs to the PanB family. In terms of assembly, homodecamer; pentamer of dimers. Mg(2+) is required as a cofactor.

The protein resides in the cytoplasm. It catalyses the reaction 3-methyl-2-oxobutanoate + (6R)-5,10-methylene-5,6,7,8-tetrahydrofolate + H2O = 2-dehydropantoate + (6S)-5,6,7,8-tetrahydrofolate. It functions in the pathway cofactor biosynthesis; (R)-pantothenate biosynthesis; (R)-pantoate from 3-methyl-2-oxobutanoate: step 1/2. Catalyzes the reversible reaction in which hydroxymethyl group from 5,10-methylenetetrahydrofolate is transferred onto alpha-ketoisovalerate to form ketopantoate. In Coxiella burnetii (strain Dugway 5J108-111), this protein is 3-methyl-2-oxobutanoate hydroxymethyltransferase.